Reading from the N-terminus, the 160-residue chain is Cyclic pyranopterin monophosphate synthase (160 aa).

Substrate-binding positions include 75–77 (MCH) and 115–116 (ME). Asp130 is a catalytic residue.

The protein belongs to the MoaC family. Homohexamer; trimer of dimers.

The catalysed reaction is (8S)-3',8-cyclo-7,8-dihydroguanosine 5'-triphosphate = cyclic pyranopterin phosphate + diphosphate. It functions in the pathway cofactor biosynthesis; molybdopterin biosynthesis. In terms of biological role, catalyzes the conversion of (8S)-3',8-cyclo-7,8-dihydroguanosine 5'-triphosphate to cyclic pyranopterin monophosphate (cPMP). The sequence is that of Cyclic pyranopterin monophosphate synthase from Lysinibacillus sphaericus (strain C3-41).